Reading from the N-terminus, the 371-residue chain is Putative glutamate--cysteine ligase 2 (371 aa).

Belongs to the glutamate--cysteine ligase type 2 family. YbdK subfamily.

The catalysed reaction is L-cysteine + L-glutamate + ATP = gamma-L-glutamyl-L-cysteine + ADP + phosphate + H(+). Its function is as follows. ATP-dependent carboxylate-amine ligase which exhibits weak glutamate--cysteine ligase activity. The sequence is that of Putative glutamate--cysteine ligase 2 from Paraburkholderia phytofirmans (strain DSM 17436 / LMG 22146 / PsJN) (Burkholderia phytofirmans).